We begin with the raw amino-acid sequence, 582 residues long: V-type ATP synthase alpha chain (582 aa).

231–238 is an ATP binding site; sequence GPFGSGKT.

The protein belongs to the ATPase alpha/beta chains family.

The catalysed reaction is ATP + H2O + 4 H(+)(in) = ADP + phosphate + 5 H(+)(out). Functionally, produces ATP from ADP in the presence of a proton gradient across the membrane. The V-type alpha chain is a catalytic subunit. The polypeptide is V-type ATP synthase alpha chain (Deinococcus geothermalis (strain DSM 11300 / CIP 105573 / AG-3a)).